Reading from the N-terminus, the 319-residue chain is V-set and transmembrane domain-containing protein 4 (319 aa).

Positions 1 to 23 (MRLRLLALAAAVLLGPAPEVCGA) are cleaved as a signal peptide. The 131-residue stretch at 24–154 (LNVTVSPGPV…SSATEMRVIS (131 aa)) folds into the Ig-like domain. Residues Asn25 and Asn41 are each glycosylated (N-linked (GlcNAc...) asparagine). Cys46 and Cys126 are oxidised to a cystine. An N-linked (GlcNAc...) asparagine glycan is attached at Asn143. A helical transmembrane segment spans residues 180–200 (AVLVCCVGILSVLLFTLVIAW).

Post-translationally, proteolytically cleaved to generate a bioactive peptide. In terms of tissue distribution, peptide Lv is widely expressed in various tissues and the central nervous system, including the retinal photoreceptor layer, hippocampus, olfactory bulb, and cerebellum.

The protein resides in the cell membrane. Its subcellular location is the secreted. Its function is as follows. Peptide Lv enhances L-type voltage-gated calcium channel (L-VGCC) currents in retinal photoreceptors. In Mus musculus (Mouse), this protein is V-set and transmembrane domain-containing protein 4 (Vstm4).